The sequence spans 328 residues: Tetraacyldisaccharide 4'-kinase (328 aa).

55-62 (TAGGNGKT) contributes to the ATP binding site.

This sequence belongs to the LpxK family.

The enzyme catalyses a lipid A disaccharide + ATP = a lipid IVA + ADP + H(+). It participates in glycolipid biosynthesis; lipid IV(A) biosynthesis; lipid IV(A) from (3R)-3-hydroxytetradecanoyl-[acyl-carrier-protein] and UDP-N-acetyl-alpha-D-glucosamine: step 6/6. Its function is as follows. Transfers the gamma-phosphate of ATP to the 4'-position of a tetraacyldisaccharide 1-phosphate intermediate (termed DS-1-P) to form tetraacyldisaccharide 1,4'-bis-phosphate (lipid IVA). The protein is Tetraacyldisaccharide 4'-kinase of Yersinia enterocolitica serotype O:8 / biotype 1B (strain NCTC 13174 / 8081).